We begin with the raw amino-acid sequence, 443 residues long: Xaa-Pro dipeptidase (443 aa).

Asp-246, Asp-257, His-339, Glu-384, and Glu-423 together coordinate Mn(2+).

This sequence belongs to the peptidase M24B family. Bacterial-type prolidase subfamily. Requires Mn(2+) as cofactor.

It catalyses the reaction Xaa-L-Pro dipeptide + H2O = an L-alpha-amino acid + L-proline. In terms of biological role, splits dipeptides with a prolyl residue in the C-terminal position. This is Xaa-Pro dipeptidase from Pectobacterium carotovorum subsp. carotovorum (strain PC1).